Reading from the N-terminus, the 523-residue chain is Anthranilate synthase component 1 (523 aa).

L-tryptophan-binding positions include S45 and P296–M298. G333–T334 is a binding site for chorismate. E366 contacts Mg(2+). Chorismate contacts are provided by residues Y454, R474, G488–G490, and G490. Position 503 (E503) interacts with Mg(2+).

The protein belongs to the anthranilate synthase component I family. As to quaternary structure, heterotetramer consisting of two non-identical subunits: a beta subunit (TrpG) and a large alpha subunit (TrpE). Mg(2+) is required as a cofactor.

It catalyses the reaction chorismate + L-glutamine = anthranilate + pyruvate + L-glutamate + H(+). The protein operates within amino-acid biosynthesis; L-tryptophan biosynthesis; L-tryptophan from chorismate: step 1/5. Its activity is regulated as follows. Feedback inhibited by tryptophan. Its function is as follows. Part of a heterotetrameric complex that catalyzes the two-step biosynthesis of anthranilate, an intermediate in the biosynthesis of L-tryptophan. In the first step, the glutamine-binding beta subunit (TrpG) of anthranilate synthase (AS) provides the glutamine amidotransferase activity which generates ammonia as a substrate that, along with chorismate, is used in the second step, catalyzed by the large alpha subunit of AS (TrpE) to produce anthranilate. In the absence of TrpG, TrpE can synthesize anthranilate directly from chorismate and high concentrations of ammonia. In Vibrio cholerae serotype O1 (strain ATCC 39315 / El Tor Inaba N16961), this protein is Anthranilate synthase component 1 (trpE).